Consider the following 599-residue polypeptide: MSDLSHIRNFSIIAHIDHGKSTLADRFIQMCGGLSEREMAAQVLDSMDLERERGITIKAHSVTLHYKARDGKTYQLNFIDTPGHVDFTYEVSRSLAACEGALLVVDAGQGVEAQSVANCYTAIEQGLEVMPVLNKMDLPQAEPERVKEEIEHIIGIDATDAVACSAKSGMGVDEVLERLVAVIPPPTGDIEAPLQALIIDSWFDNYLGVVSLVRVRHGRIKKGDKVLVKSTGKVHQVDSVGVFTPKHSATADLKAGEVGFIIAGIKDIHGAPVGDTLTLSSTPDVEMLPGFQRIKPQVYAGLFPVSSDDFEDFREALQKLTLNDAALQYEPESSEALGFGFRIGFLGMLHMEIIQERLEREYDLDLITTAPTVVYELLLKNGDTIYVDNPSRLPDLSFIEDMREPIVQANILVPQDHLGNVITLCIEKRGVQRDMQFLGSQVQVRYDLPMSEVVLDFFDRLKSVSRGYASLDYSFVRFQSANLVKLDVLINGEKVDALALIVHRDNAHYKGRQLTEKMKELIPRQMFDVAIQAAIGGQIVARTTVKALRKNVLAKCYGGDVSRKRKLLEKQKAGKKRMKQVGSVEIPQEAFLAVLKVDS.

One can recognise a tr-type G domain in the interval 5–187; it reads SHIRNFSIIA…RLVAVIPPPT (183 aa). Residues 17–22 and 134–137 each bind GTP; these read DHGKST and NKMD.

Belongs to the TRAFAC class translation factor GTPase superfamily. Classic translation factor GTPase family. LepA subfamily.

The protein localises to the cell inner membrane. The enzyme catalyses GTP + H2O = GDP + phosphate + H(+). Its function is as follows. Required for accurate and efficient protein synthesis under certain stress conditions. May act as a fidelity factor of the translation reaction, by catalyzing a one-codon backward translocation of tRNAs on improperly translocated ribosomes. Back-translocation proceeds from a post-translocation (POST) complex to a pre-translocation (PRE) complex, thus giving elongation factor G a second chance to translocate the tRNAs correctly. Binds to ribosomes in a GTP-dependent manner. This is Elongation factor 4 from Stutzerimonas stutzeri (strain A1501) (Pseudomonas stutzeri).